Here is a 221-residue protein sequence, read N- to C-terminus: GTP-binding nuclear protein Ran-A1 (221 aa).

A Small GTPase Ran-type domain is found at 10–174 (DYPSFKLVIV…LYLARKLAGD (165 aa)). GTP is bound at residue 21–28 (DGGTGKTT). The switch-I stretch occupies residues 40–48 (KKYEPTIGV). GTP-binding positions include glycine 71, 125 to 128 (NKVD), and 153 to 155 (SAK). A switch-II region spans residues 71–87 (GQEKFGGLRDGYYIHGQ). Positions 199-208 (QHEAELAAAA) are enriched in low complexity. Residues 199-221 (QHEAELAAAASQPLPDDDDETFD) form a disordered region.

Belongs to the small GTPase superfamily. Ran family. As to quaternary structure, found in a nuclear export complex with RanGTP, exportin and pre-miRNA.

It localises to the nucleus. GTP-binding protein involved in nucleocytoplasmic transport. Required for the import of protein into the nucleus and also for RNA export. Involved in chromatin condensation and control of cell cycle. In Nicotiana tabacum (Common tobacco), this protein is GTP-binding nuclear protein Ran-A1 (RAN-A1).